The following is a 625-amino-acid chain: Phosphomethylpyrimidine synthase (625 aa).

Residues asparagine 231, methionine 260, tyrosine 289, histidine 325, 345 to 347, 386 to 389, and glutamate 425 each bind substrate; these read SRG and DGLR. Zn(2+) is bound at residue histidine 429. A substrate-binding site is contributed by tyrosine 452. Residue histidine 493 participates in Zn(2+) binding. 3 residues coordinate [4Fe-4S] cluster: cysteine 573, cysteine 576, and cysteine 581.

Belongs to the ThiC family. As to quaternary structure, homodimer. It depends on [4Fe-4S] cluster as a cofactor.

It carries out the reaction 5-amino-1-(5-phospho-beta-D-ribosyl)imidazole + S-adenosyl-L-methionine = 4-amino-2-methyl-5-(phosphooxymethyl)pyrimidine + CO + 5'-deoxyadenosine + formate + L-methionine + 3 H(+). It participates in cofactor biosynthesis; thiamine diphosphate biosynthesis. Catalyzes the synthesis of the hydroxymethylpyrimidine phosphate (HMP-P) moiety of thiamine from aminoimidazole ribotide (AIR) in a radical S-adenosyl-L-methionine (SAM)-dependent reaction. This is Phosphomethylpyrimidine synthase from Acinetobacter baumannii (strain AB0057).